A 66-amino-acid chain; its full sequence is MPKQKTHRASAKRFKRTGSGGLKRFRAYTSHRFHGKTKKQRRHLRKAGMVHAGDFKRIKAMLTGLK.

A compositionally biased stretch (basic residues) spans 1–16 (MPKQKTHRASAKRFKR). Residues 1–21 (MPKQKTHRASAKRFKRTGSGG) are disordered.

This sequence belongs to the bacterial ribosomal protein bL35 family.

The protein is Large ribosomal subunit protein bL35 of Streptococcus sanguinis (strain SK36).